The primary structure comprises 311 residues: Methionyl-tRNA formyltransferase (311 aa).

(6S)-5,6,7,8-tetrahydrofolate is bound at residue 112 to 115 (SLLP).

It belongs to the Fmt family.

It carries out the reaction L-methionyl-tRNA(fMet) + (6R)-10-formyltetrahydrofolate = N-formyl-L-methionyl-tRNA(fMet) + (6S)-5,6,7,8-tetrahydrofolate + H(+). Its function is as follows. Attaches a formyl group to the free amino group of methionyl-tRNA(fMet). The formyl group appears to play a dual role in the initiator identity of N-formylmethionyl-tRNA by promoting its recognition by IF2 and preventing the misappropriation of this tRNA by the elongation apparatus. This chain is Methionyl-tRNA formyltransferase, found in Bradyrhizobium sp. (strain BTAi1 / ATCC BAA-1182).